The primary structure comprises 626 residues: DNA mismatch repair protein MutL (626 aa).

The disordered stretch occupies residues 352–399 (QPPSPSFTSRPSSAGYASGSWHPAVSSPRTEWSPQTAHPAHRPLDLGA). Residues 378–387 (SPRTEWSPQT) are compositionally biased toward polar residues.

The protein belongs to the DNA mismatch repair MutL/HexB family.

Functionally, this protein is involved in the repair of mismatches in DNA. It is required for dam-dependent methyl-directed DNA mismatch repair. May act as a 'molecular matchmaker', a protein that promotes the formation of a stable complex between two or more DNA-binding proteins in an ATP-dependent manner without itself being part of a final effector complex. The sequence is that of DNA mismatch repair protein MutL from Brucella anthropi (strain ATCC 49188 / DSM 6882 / CCUG 24695 / JCM 21032 / LMG 3331 / NBRC 15819 / NCTC 12168 / Alc 37) (Ochrobactrum anthropi).